We begin with the raw amino-acid sequence, 93 residues long: Small ribosomal subunit protein uS19 (93 aa).

Disordered stretches follow at residues 1-25 and 74-93; these read MPRS…QNTK and FAPT…ARRR. Composition is skewed to basic and acidic residues over residues 14 to 23 and 81 to 93; these read HLQKKVDDQN and RGHD…ARRR.

This sequence belongs to the universal ribosomal protein uS19 family.

Protein S19 forms a complex with S13 that binds strongly to the 16S ribosomal RNA. This chain is Small ribosomal subunit protein uS19, found in Beutenbergia cavernae (strain ATCC BAA-8 / DSM 12333 / CCUG 43141 / JCM 11478 / NBRC 16432 / NCIMB 13614 / HKI 0122).